The following is a 379-amino-acid chain: Chaperone protein DnaJ (379 aa).

The J domain maps to 5–69 (DYYEVLGISK…NKRASYDQFG (65 aa)). The segment at 136 to 218 (GTTKEISIRK…CHGKGTENKT (83 aa)) adopts a CR-type zinc-finger fold. Residues cysteine 149, cysteine 152, cysteine 166, cysteine 169, cysteine 192, cysteine 195, cysteine 206, and cysteine 209 each contribute to the Zn(2+) site. CXXCXGXG motif repeat units lie at residues 149 to 156 (CETCHGDG), 166 to 173 (CSYCNGAG), 192 to 199 (CPKCNGSG), and 206 to 213 (CPTCHGKG).

It belongs to the DnaJ family. Homodimer. It depends on Zn(2+) as a cofactor.

It localises to the cytoplasm. Functionally, participates actively in the response to hyperosmotic and heat shock by preventing the aggregation of stress-denatured proteins and by disaggregating proteins, also in an autonomous, DnaK-independent fashion. Unfolded proteins bind initially to DnaJ; upon interaction with the DnaJ-bound protein, DnaK hydrolyzes its bound ATP, resulting in the formation of a stable complex. GrpE releases ADP from DnaK; ATP binding to DnaK triggers the release of the substrate protein, thus completing the reaction cycle. Several rounds of ATP-dependent interactions between DnaJ, DnaK and GrpE are required for fully efficient folding. Also involved, together with DnaK and GrpE, in the DNA replication of plasmids through activation of initiation proteins. The protein is Chaperone protein DnaJ of Staphylococcus aureus (strain bovine RF122 / ET3-1).